Reading from the N-terminus, the 231-residue chain is Equistatin (231 aa).

The N-terminal stretch at Met1–Ala32 is a signal peptide. Thyroglobulin type-1 domains lie at Leu34–Cys95, Leu102–Cys163, and Leu167–Cys231. Disulfide bonds link Cys37/Cys56, Cys67/Cys74, Cys76/Cys95, Cys105/Cys124, Cys135/Cys142, Cys144/Cys163, Cys170/Cys191, Cys202/Cys209, and Cys211/Cys231.

The protein belongs to the protease inhibitor I31 family.

It localises to the secreted. Its function is as follows. Potent inhibitor of papain-like cysteine proteinases (Ki=0.18-0.57 nM on papain), as well as of the aspartic proteinase cathepsin D (Ki=0.3-05 nM). The protein is Equistatin of Actinia equina (Beadlet anemone).